Here is a 398-residue protein sequence, read N- to C-terminus: Streptopain (398 aa).

Positions 1–27 (MNKKKLGIRLLSLLALGGFVLANPVFA) are cleaved as a signal peptide. The propeptide occupies 28-145 (DQNFARNEKE…TTYAGTAEIK (118 aa)). Cysteine 192 functions as the Nucleophile in the catalytic mechanism. Cysteine 192 carries the post-translational modification Cysteine methyl disulfide; in zymogen form. Positions 282 and 339 each coordinate a protein. Histidine 340 (proton acceptor) is an active-site residue. The segment at 368–390 (RLDALNPSALGTGGGAGGFNGYQ) is C-terminal active site loop.

It belongs to the peptidase C10 family. Monomer. In terms of processing, the mature protease is derived from the precursor sequence by cleavage, either in cis via an autocatalytic mechanism, or in trans by mature SpeB or host proteases (trypsin, plasmin or subtilisin). Maturation can involve a number of protein cleavage intermediates. Mature SpeB probably plays the most important role in protein maturation in physiological conditions. Post-translationally, methylthiolation at Cys-192 of the inactive zymogen form is probably involved in the mechanism of secretion of the proteinase into the culture fluid.

The protein localises to the secreted. It is found in the host extracellular space. It localises to the host cytoplasm. The catalysed reaction is Preferential cleavage with hydrophobic residues at P2, P1 and P1'.. Synthesized as an inactive zymogen to protect the intracellular components of the bacteria from proteolytic activity during protein production. Once secreted into the extracellular milieu, cleaved into the active protease: maturation can be mediated in cis by autocatalytic cleavage, or in trans by mature SpeB or host proteases. Protease activity is strongly inhibited by zinc and copper, which prevent its maturation into an active protease: inhibition by metal ions may be required to prevent proteolysis of streptococcal proteins. In terms of biological role, cysteine protease that acts as a key streptococcal virulence factor by cleaving host proteins involved in immune response. Triggers inflammation by mediating cleavage of host proteins, which can both promote host pathogenesis by triggering sterile inflammation and/or restrict streptococcal infection, depending on host immune statue and infection site. Cleaves host gasdermin-A (GSDMA) in epithelial cells, promoting GSDMA activation and formation of gasdermin pores, triggering pyroptosis. Pyroptosis triggers the elimination of the infected skin cell, depriving the pathogen of its protective niche, while inducing an inflammatory response. This ultimately prevents bacterial penetration of the epithelial barrier and a subsequent systemic dissemination of the pathogen. Also mediates cleavage of the cytokine precursor interleukin-1 beta (IL1B) to its mature form, resulting in inflammation and septic shock. SpeB-mediated maturation of IL1B plays a dual role depending on infection site: while IL1B inflammatory response prevents bacterial growth during invasive skin infections, it promotes streptococcal infection of the nasopharynx by disrupting colonization resistance mediated by the microbiota. Inhibits host autophagy be catalyzing cleavage and inactivation of key autophagy factors, such as CALCOCO2, NBR1 and SQSTM1. Cleaves and inhibits a number of complement factors, such as C2, C3-beta chain of C3, C4, C5 or SERPING1, thereby promoting evasion of host immunity. May also impair adaptive immunity by catalyzing cleavage and degradation of host immunoglobulins to promote immune system evasion; the relevance of this activity is however unsure in vivo. Catalyzes maturation and release of the peptide hormone bradykinin from the precursor Kininogen-1 (KNG1) to produce hypotension during septic shock. Also involved in bacterial translocation across the host epithelial barrier by mediating cleavage and degradation of host epithelial junction proteins, such as CDH1 and OCLN. Additionally, has been involved in degradation of fibronectin and vitronectin, two host extracellular matrix proteins involved in tissue integrity. Also able to catalyze cleavage and degradation of streptococcal proteins, such as C5a peptidase, EndoS or SmeZ. Degradation of streptococcal proteins is however strictly regulated to preserve integrity of other virulence factors. The chain is Streptopain (speB) from Streptococcus pyogenes serotype M28 (strain MGAS6180).